The sequence spans 367 residues: UDP-N-acetylglucosamine--N-acetylmuramyl-(pentapeptide) pyrophosphoryl-undecaprenol N-acetylglucosamine transferase (367 aa).

Residues 15–17, asparagine 127, arginine 163, serine 191, isoleucine 249, and glutamine 294 each bind UDP-N-acetyl-alpha-D-glucosamine; that span reads TGG.

The protein belongs to the glycosyltransferase 28 family. MurG subfamily.

The protein localises to the cell inner membrane. It catalyses the reaction di-trans,octa-cis-undecaprenyl diphospho-N-acetyl-alpha-D-muramoyl-L-alanyl-D-glutamyl-meso-2,6-diaminopimeloyl-D-alanyl-D-alanine + UDP-N-acetyl-alpha-D-glucosamine = di-trans,octa-cis-undecaprenyl diphospho-[N-acetyl-alpha-D-glucosaminyl-(1-&gt;4)]-N-acetyl-alpha-D-muramoyl-L-alanyl-D-glutamyl-meso-2,6-diaminopimeloyl-D-alanyl-D-alanine + UDP + H(+). It participates in cell wall biogenesis; peptidoglycan biosynthesis. Its function is as follows. Cell wall formation. Catalyzes the transfer of a GlcNAc subunit on undecaprenyl-pyrophosphoryl-MurNAc-pentapeptide (lipid intermediate I) to form undecaprenyl-pyrophosphoryl-MurNAc-(pentapeptide)GlcNAc (lipid intermediate II). The protein is UDP-N-acetylglucosamine--N-acetylmuramyl-(pentapeptide) pyrophosphoryl-undecaprenol N-acetylglucosamine transferase of Burkholderia pseudomallei (strain 1710b).